The sequence spans 665 residues: Coiled-coil domain-containing protein 138 (665 aa).

A Phosphothreonine modification is found at Thr-48. Ser-49 carries the phosphoserine modification. Positions 198-323 (QQKFAEELQK…YEFMTIQRLK (126 aa)) form a coiled coil. A Phosphoserine modification is found at Ser-469.

The chain is Coiled-coil domain-containing protein 138 (CCDC138) from Homo sapiens (Human).